Here is an 81-residue protein sequence, read N- to C-terminus: ATP synthase subunit c (81 aa).

Helical transmembrane passes span 7–27 (AASV…PGIG) and 57–77 (LAFM…LLFA).

It belongs to the ATPase C chain family. F-type ATPases have 2 components, F(1) - the catalytic core - and F(0) - the membrane proton channel. F(1) has five subunits: alpha(3), beta(3), gamma(1), delta(1), epsilon(1). F(0) has four main subunits: a(1), b(1), b'(1) and c(10-14). The alpha and beta chains form an alternating ring which encloses part of the gamma chain. F(1) is attached to F(0) by a central stalk formed by the gamma and epsilon chains, while a peripheral stalk is formed by the delta, b and b' chains.

It is found in the cellular thylakoid membrane. In terms of biological role, f(1)F(0) ATP synthase produces ATP from ADP in the presence of a proton or sodium gradient. F-type ATPases consist of two structural domains, F(1) containing the extramembraneous catalytic core and F(0) containing the membrane proton channel, linked together by a central stalk and a peripheral stalk. During catalysis, ATP synthesis in the catalytic domain of F(1) is coupled via a rotary mechanism of the central stalk subunits to proton translocation. Functionally, key component of the F(0) channel; it plays a direct role in translocation across the membrane. A homomeric c-ring of between 10-14 subunits forms the central stalk rotor element with the F(1) delta and epsilon subunits. The polypeptide is ATP synthase subunit c (Synechococcus sp. (strain CC9902)).